Reading from the N-terminus, the 101-residue chain is Apolipoprotein C-II (101 aa).

A signal peptide spans 1 to 22 (MGTRFLLALCLVLLVLGFEVQG). The lipid binding stretch occupies residues 66–74 (AVDEKLRDL). The tract at residues 78-101 (STAAMSTYTGIFTDQVLSVLKGEE) is lipoprotein lipase cofactor.

This sequence belongs to the apolipoprotein C2 family. Proapolipoprotein C-II is synthesized as a sialic acid containing glycoprotein which is subsequently desialylated prior to its proteolytic processing. Post-translationally, proapolipoprotein C-II, the major form found in plasma undergoes proteolytic cleavage of its N-terminal hexapeptide to generate apolipoprotein C-II, which occurs as the minor form in plasma.

It localises to the secreted. Its function is as follows. Component of chylomicrons, very low-density lipoproteins (VLDL), low-density lipoproteins (LDL), and high-density lipoproteins (HDL) in plasma. Plays an important role in lipoprotein metabolism as an activator of lipoprotein lipase. Both proapolipoprotein C-II and apolipoprotein C-II can activate lipoprotein lipase. This Macaca fascicularis (Crab-eating macaque) protein is Apolipoprotein C-II (APOC2).